Consider the following 466-residue polypeptide: MTYAPVTDVLSGKLAVDSEVTVRGWIRSRRDSKAGISFLAVYDGSCFDPIQAVVPNDLNNYNDEVLKLTTGCSVEVTGTIVASPAKGQDFELAATEVKVVGWVEDAETYPMAKTRHSIEYLREVAHLRPRTNVIGAVARVRNCLSQAIHRFYHEQGYFWMSAPLITASDAEGAGEMFRVSTLDHANLPLDDKGNVDYDKDFFGKETFLTVSGQLNAETYACALSKVYTFGPTFRAENSHTSRHLAEFWMVEPEVAFATLDDVAKLAEDMLKYVFEAVLAERRDDLEFFASRIDKQAITRLEQFVSSDFAQVDYTDAIQILKDSGRDFEFDVEWGIDMSSEHERYLAEEHFKAPVIVKNYPKDIKAFYMRQNDDGKTVAAMDVLAPGIGEIIGGSQREERLDILDARMIEMGIDPEHMSWYRDLRRYGTVPHAGFGLGFERLVSYVTGMGNVRDVIPFPRTPRSANF.

The protein belongs to the class-II aminoacyl-tRNA synthetase family. As to quaternary structure, homodimer.

Its subcellular location is the cytoplasm. The catalysed reaction is tRNA(Asn) + L-asparagine + ATP = L-asparaginyl-tRNA(Asn) + AMP + diphosphate + H(+). The polypeptide is Asparagine--tRNA ligase (Aliivibrio fischeri (strain ATCC 700601 / ES114) (Vibrio fischeri)).